A 1079-amino-acid polypeptide reads, in one-letter code: DNA-directed RNA polymerase subunit beta (1079 aa).

Residues 963 to 982 form a disordered region; the sequence is RSTGPYSRVTQQPVKGRARR. A compositionally biased stretch (polar residues) spans 966 to 975; the sequence is GPYSRVTQQP.

Belongs to the RNA polymerase beta chain family. In terms of assembly, in plastids the minimal PEP RNA polymerase catalytic core is composed of four subunits: alpha, beta, beta', and beta''. When a (nuclear-encoded) sigma factor is associated with the core the holoenzyme is formed, which can initiate transcription.

The protein localises to the plastid. It is found in the chloroplast. The enzyme catalyses RNA(n) + a ribonucleoside 5'-triphosphate = RNA(n+1) + diphosphate. DNA-dependent RNA polymerase catalyzes the transcription of DNA into RNA using the four ribonucleoside triphosphates as substrates. The sequence is that of DNA-directed RNA polymerase subunit beta from Pelargonium hortorum (Common geranium).